The chain runs to 421 residues: Polymerase delta-interacting protein 3 (421 aa).

Ala2 carries the post-translational modification N-acetylalanine. Ser5 bears the Phosphoserine mark. Arg33 carries the post-translational modification Omega-N-methylarginine. Ser44 and Ser127 each carry phosphoserine. Thr140 carries the phosphothreonine modification. A Glycyl lysine isopeptide (Lys-Gly) (interchain with G-Cter in SUMO2) cross-link involves residue Lys200. Ser204, Ser215, and Ser217 each carry phosphoserine. Lys223 participates in a covalent cross-link: Glycyl lysine isopeptide (Lys-Gly) (interchain with G-Cter in SUMO2). Ser244 is modified (phosphoserine). Residue Lys248 forms a Glycyl lysine isopeptide (Lys-Gly) (interchain with G-Cter in SUMO2) linkage. Ser275 carries the post-translational modification Phosphoserine. Residues 280 to 351 (TKMTVNNLHP…QPMKCNLHMN (72 aa)) form the RRM domain. Residues 370–379 (SMKKESELPR) are compositionally biased toward basic and acidic residues. The segment at 370 to 393 (SMKKESELPRRVNSASSSNPPAEV) is disordered. Lys372 is covalently cross-linked (Glycyl lysine isopeptide (Lys-Gly) (interchain with G-Cter in SUMO2)). Ser383 and Ser385 each carry phosphoserine; by RPS6KB1. Residue Lys418 forms a Glycyl lysine isopeptide (Lys-Gly) (interchain with G-Cter in SUMO2) linkage.

Interacts with POLD2. Interacts with NCBP1 and EIF4A3. Associates with the multiprotein exon junction complex (EJC). Interacts with RPS6KB1 (activated). Interacts with ERH. Interacts with THOC2, DDX39B and ZC3H11A; the interactions are ATP-dependent and indicative for an association with the TREX complex. Phosphorylated at Ser-383 and Ser-385 by RPS6KB1.

It is found in the nucleus. The protein localises to the nucleus speckle. It localises to the cytoplasm. Is involved in regulation of translation. Is preferentially associated with CBC-bound spliced mRNA-protein complexes during the pioneer round of mRNA translation. Contributes to enhanced translational efficiency of spliced over nonspliced mRNAs. Recruits activated ribosomal protein S6 kinase beta-1 I/RPS6KB1 to newly synthesized mRNA. Involved in nuclear mRNA export; probably mediated by association with the TREX complex. This chain is Polymerase delta-interacting protein 3 (POLDIP3), found in Homo sapiens (Human).